Reading from the N-terminus, the 383-residue chain is Embryonic pepsinogen (383 aa).

Positions 1-16 are cleaved as a signal peptide; it reads MRSLALLCAVLALSDG. The Peptidase A1 domain maps to 76-380; the sequence is YYGTISIGTP…DRANNRVGLA (305 aa). The active site involves D94. An intrachain disulfide couples C107 to C112. N-linked (GlcNAc...) asparagine glycans are attached at residues N132 and N204. A disulfide bridge connects residues C267 and C271. The active site involves D276. N309 carries N-linked (GlcNAc...) asparagine glycosylation. The cysteines at positions 310 and 344 are disulfide-linked. N350 is a glycosylation site (N-linked (GlcNAc...) asparagine).

Belongs to the peptidase A1 family.

The polypeptide is Embryonic pepsinogen (Gallus gallus (Chicken)).